The primary structure comprises 468 residues: 3-isopropylmalate dehydratase large subunit (468 aa).

The [4Fe-4S] cluster site is built by C347, C407, and C410.

Belongs to the aconitase/IPM isomerase family. LeuC type 1 subfamily. As to quaternary structure, heterodimer of LeuC and LeuD. The cofactor is [4Fe-4S] cluster.

It catalyses the reaction (2R,3S)-3-isopropylmalate = (2S)-2-isopropylmalate. The protein operates within amino-acid biosynthesis; L-leucine biosynthesis; L-leucine from 3-methyl-2-oxobutanoate: step 2/4. In terms of biological role, catalyzes the isomerization between 2-isopropylmalate and 3-isopropylmalate, via the formation of 2-isopropylmaleate. The protein is 3-isopropylmalate dehydratase large subunit of Prochlorococcus marinus (strain AS9601).